Here is a 270-residue protein sequence, read N- to C-terminus: Fluoride-specific ion channel FluC 1 (270 aa).

Helical transmembrane passes span 4–24, 35–55, 67–87, and 96–116; these read IIIL…FIML, LDIL…TALY, IIGT…YGSV, and AFLI…VAVL. Na(+)-binding residues include G74 and S77.

It belongs to the fluoride channel Fluc/FEX (TC 1.A.43) family.

It is found in the cell inner membrane. The enzyme catalyses fluoride(in) = fluoride(out). Its activity is regulated as follows. Na(+) is not transported, but it plays an essential structural role and its presence is essential for fluoride channel function. In terms of biological role, fluoride-specific ion channel. Important for reducing fluoride concentration in the cell, thus reducing its toxicity. This is Fluoride-specific ion channel FluC 1 from Brucella abortus biovar 1 (strain 9-941).